A 144-amino-acid polypeptide reads, in one-letter code: Putative golgin subfamily A member 2B (144 aa).

2 disordered regions span residues Met1–Leu20 and Ser95–Gly132. Positions Ala110–Ala131 are enriched in gly residues.

It belongs to the GOLGA2 family.

In Homo sapiens (Human), this protein is Putative golgin subfamily A member 2B (GOLGA2P5).